Reading from the N-terminus, the 85-residue chain is Small ribosomal subunit protein uS17 (85 aa).

Belongs to the universal ribosomal protein uS17 family. As to quaternary structure, part of the 30S ribosomal subunit.

One of the primary rRNA binding proteins, it binds specifically to the 5'-end of 16S ribosomal RNA. In Mycoplasmoides gallisepticum (strain R(low / passage 15 / clone 2)) (Mycoplasma gallisepticum), this protein is Small ribosomal subunit protein uS17.